A 39-amino-acid polypeptide reads, in one-letter code: SPbeta prophage-derived uncharacterized protein YorT (39 aa).

This chain is SPbeta prophage-derived uncharacterized protein YorT (yorT), found in Bacillus subtilis (strain 168).